Here is a 778-residue protein sequence, read N- to C-terminus: DEK domain-containing chromatin-associated protein 4 (778 aa).

Disordered stretches follow at residues 1 to 334 (MGEE…RPVR) and 475 to 689 (LVNE…PSDE). The span at 14–26 (ANGTSSLQKTSDA) shows a compositional bias: polar residues. Basic and acidic residues-rich tracts occupy residues 40–95 (EVQE…PEAD), 121–153 (AVMKESVESADNKDAENPEGEQEKESKEEKLEG), 165–185 (EEKLVGGDKGDDVDEAEKVEN), and 209–243 (TNKGEEVKEANKEDDVEADTKVAEPEVEDKKTESK). Positions 191–300 (KEEALKEKNE…KEDIKKSNKR (110 aa)) form a coiled coil. The segment covering 244–286 (DENEDKEEEKEDEKEESMDDKEDEKEESNDDDKEDEKEESNDD) has biased composition (acidic residues). 2 stretches are compositionally biased toward basic and acidic residues: residues 287–296 (KEDKKEDIKK) and 303–323 (GKTEKTRGKTKSDEEKKDIEP). The short motif at 289–296 (DKKEDIKK) is the Nuclear localization signal 1 element. The Nuclear localization signal 2 motif lies at 489–496 (PKKSSPAA). Low complexity predominate over residues 491–502 (KSSPAAGSSSSK). Residues 526-587 (DDESEEEKED…EESEEETKKK (62 aa)) adopt a coiled-coil conformation. 2 stretches are compositionally biased toward acidic residues: residues 527–553 (DESEEEKEDDEEEEKEQEVEEEEEENE) and 560–582 (SEDEAPQLSESEENVESEEESEE). A Nuclear localization signal 3 motif is present at residues 618–625 (PKKATQKR). The span at 621 to 631 (ATQKRSAGKRK) shows a compositional bias: basic residues. Residues 678–689 (KGKDKNKEPSDE) are compositionally biased toward basic and acidic residues. The 56-residue stretch at 685–740 (EPSDEELKTAIIDILKGVDFNTATFTDILKRLDAKFNISLASKKSSIKRMIQDELT) folds into the DEK-C domain. 2 consecutive DNA-binding regions follow at residues 703 to 717 (DFNTATFTDILKRLD) and 732 to 736 (KRMIQ). Residues 732 to 766 (KRMIQDELTKLADEAEDEEGEEEDAEHEEEEEKEK) adopt a coiled-coil conformation. A disordered region spans residues 741-778 (KLADEAEDEEGEEEDAEHEEEEEKEKAKGSGGGEEVKA). Acidic residues predominate over residues 745–763 (EAEDEEGEEEDAEHEEEEE). Residues 764-778 (KEKAKGSGGGEEVKA) are compositionally biased toward basic and acidic residues.

As to quaternary structure, interacts with DEK3.

Its subcellular location is the nucleus. The protein localises to the nucleolus. Functionally, chromatin-associated protein which contributes to the modulation of chromatin structure (such as super-helical structure of DNA) and function. Binds to chromatin of protein-coding genes throughout the genome to regulate nucleosome occupancy and chromatin accessibility, and to modulate the expression of target genes. This chain is DEK domain-containing chromatin-associated protein 4, found in Arabidopsis thaliana (Mouse-ear cress).